The primary structure comprises 863 residues: Leucine--tRNA ligase (863 aa).

The 'HIGH' region motif lies at 40 to 51 (PYPSGAGLHVGH). Residues 635 to 639 (KMSKS) carry the 'KMSKS' region motif. An ATP-binding site is contributed by Lys-638.

This sequence belongs to the class-I aminoacyl-tRNA synthetase family.

The protein resides in the cytoplasm. The enzyme catalyses tRNA(Leu) + L-leucine + ATP = L-leucyl-tRNA(Leu) + AMP + diphosphate. The chain is Leucine--tRNA ligase from Leptospira interrogans serogroup Icterohaemorrhagiae serovar copenhageni (strain Fiocruz L1-130).